The sequence spans 142 residues: Hemoglobin subunit alpha-A (142 aa).

A Globin domain is found at 2-142 (VLSAADKTNV…VATVLTAKYR (141 aa)). H59 is a binding site for O2. H88 is a heme b binding site.

Belongs to the globin family. As to quaternary structure, heterotetramer of two alpha chains and two beta chains. Red blood cells.

In terms of biological role, involved in oxygen transport from the lung to the various peripheral tissues. This Apus apus (Common swift) protein is Hemoglobin subunit alpha-A (HBAA).